The chain runs to 184 residues: Lactoylglutathione lyase (184 aa).

Alanine 2 carries the N-acetylalanine modification. Cysteine 19 and cysteine 20 are disulfide-bonded. One can recognise a VOC domain in the interval 31 to 177; the sequence is LLQQTMLRVK…DGYWIEILNP (147 aa). Substrate-binding residues include glutamine 34 and arginine 38. Glutamine 34 provides a ligand contact to Zn(2+). Cysteine 61 and cysteine 139 are oxidised to a cystine. Residue lysine 88 is modified to N6-succinyllysine. Position 100 (glutamate 100) interacts with Zn(2+). Position 104 (asparagine 104) interacts with substrate. Position 107 is a phosphothreonine (threonine 107). The substrate site is built by arginine 123 and histidine 127. Residue histidine 127 coordinates Zn(2+). Cysteine 139 is modified (S-glutathionyl cysteine; alternate). Lysine 148 bears the N6-acetyllysine; alternate mark. An N6-succinyllysine; alternate modification is found at lysine 148. 157 to 158 contacts substrate; that stretch reads KM. Glutamate 173 provides a ligand contact to Zn(2+). The active-site Proton donor/acceptor is the glutamate 173.

It belongs to the glyoxalase I family. As to quaternary structure, homodimer. It depends on Zn(2+) as a cofactor. Glutathionylation at Cys-139 inhibits enzyme activity. Post-translationally, phosphorylated at Thr-107 in the presence of CaMK2. However, this is a consensus site for phosphorylation by CK2 so phosphorylation may be mediated by CK2 rather than CaMK2. Phosphorylation is induced by TNF and suppresses the TNF-induced transcriptional activity of NF-kappa-B. In terms of processing, exists in a nitric oxide (NO)-modified form. The exact nature of the modification is unknown, but it suppresses the TNF-induced transcriptional activity of NF-kappa-B.

The catalysed reaction is (R)-S-lactoylglutathione = methylglyoxal + glutathione. It participates in secondary metabolite metabolism; methylglyoxal degradation; (R)-lactate from methylglyoxal: step 1/2. Regulated by oxidation of Cys-139 in response to the redox state of the cell. Results in the alternative formation of cystine or glutathione-bound cysteine, the latter modification leading to reduced enzyme activity. Functionally, catalyzes the conversion of hemimercaptal, formed from methylglyoxal and glutathione, to S-lactoylglutathione. Involved in the regulation of TNF-induced transcriptional activity of NF-kappa-B. Required for normal osteoclastogenesis. This Homo sapiens (Human) protein is Lactoylglutathione lyase (GLO1).